A 473-amino-acid chain; its full sequence is Glutamyl-tRNA reductase (473 aa).

Substrate is bound by residues 49–52 (TCNR), Ser-109, 114–116 (EHQ), and Gln-120. Cys-50 functions as the Nucleophile in the catalytic mechanism. 189–194 (GAGAMA) is an NADP(+) binding site. Residues 422–473 (VAISAPQPSTDSPARAAYQPTDEAATDAEPRRDDAEPPSAAAAQDAGRESRP) are disordered.

Belongs to the glutamyl-tRNA reductase family. As to quaternary structure, homodimer.

It carries out the reaction (S)-4-amino-5-oxopentanoate + tRNA(Glu) + NADP(+) = L-glutamyl-tRNA(Glu) + NADPH + H(+). It participates in porphyrin-containing compound metabolism; protoporphyrin-IX biosynthesis; 5-aminolevulinate from L-glutamyl-tRNA(Glu): step 1/2. Catalyzes the NADPH-dependent reduction of glutamyl-tRNA(Glu) to glutamate 1-semialdehyde (GSA). This Acidothermus cellulolyticus (strain ATCC 43068 / DSM 8971 / 11B) protein is Glutamyl-tRNA reductase.